Consider the following 459-residue polypeptide: Trigger factor (459 aa).

The PPIase FKBP-type domain occupies G166–P245.

The protein belongs to the FKBP-type PPIase family. Tig subfamily.

It is found in the cytoplasm. It catalyses the reaction [protein]-peptidylproline (omega=180) = [protein]-peptidylproline (omega=0). Its function is as follows. Involved in protein export. Acts as a chaperone by maintaining the newly synthesized protein in an open conformation. Functions as a peptidyl-prolyl cis-trans isomerase. The sequence is that of Trigger factor from Bifidobacterium longum subsp. infantis (strain ATCC 15697 / DSM 20088 / JCM 1222 / NCTC 11817 / S12).